A 919-amino-acid chain; its full sequence is Probable dipeptidyl-aminopeptidase B (919 aa).

Over residues 1 to 10 the composition is skewed to basic and acidic residues; the sequence is MRPSDDHGET. The interval 1–50 is disordered; that stretch reads MRPSDDHGETSEFLPITRSRSVSAASQTSTDSSLSTESLFPGEQKPFPNV. The Cytoplasmic portion of the chain corresponds to 1-92; that stretch reads MRPSDDHGET…AATGGGRARR (92 aa). The span at 21-38 shows a compositional bias: low complexity; that stretch reads SVSAASQTSTDSSLSTES. The chain crosses the membrane as a helical; Signal-anchor for type II membrane protein span at residues 93–113; the sequence is IFWILVLLCLGGWLLAFALFL. Residues 114-919 are Vacuolar-facing; sequence TGGRANYQTA…MKRSLPLLYP (806 aa). 3 N-linked (GlcNAc...) asparagine glycosylation sites follow: Asn200, Asn352, and Asn643. The active-site Charge relay system is the Ser757. Asn811 carries N-linked (GlcNAc...) asparagine glycosylation. Residues Asp834 and His867 each act as charge relay system in the active site.

Belongs to the peptidase S9B family.

The protein resides in the vacuole membrane. It carries out the reaction Release of an N-terminal dipeptide, Xaa-Yaa-|-Zaa-, from a polypeptide, preferentially when Yaa is Pro, provided Zaa is neither Pro nor hydroxyproline.. In terms of biological role, type IV dipeptidyl-peptidase which removes N-terminal dipeptides sequentially from polypeptides having unsubstituted N-termini provided that the penultimate residue is proline. The polypeptide is Probable dipeptidyl-aminopeptidase B (dapB) (Neosartorya fischeri (strain ATCC 1020 / DSM 3700 / CBS 544.65 / FGSC A1164 / JCM 1740 / NRRL 181 / WB 181) (Aspergillus fischerianus)).